Here is a 173-residue protein sequence, read N- to C-terminus: Ribonuclease H (173 aa).

Positions Met1–Pro20 are disordered. Positions Pro20–Gly162 constitute an RNase H type-1 domain. 4 residues coordinate Mg(2+): Asp29, Glu67, Asp89, and Asp154.

It belongs to the RNase H family. In terms of assembly, monomer. It depends on Mg(2+) as a cofactor.

The protein localises to the cytoplasm. It catalyses the reaction Endonucleolytic cleavage to 5'-phosphomonoester.. Endonuclease that specifically degrades the RNA of RNA-DNA hybrids. The protein is Ribonuclease H of Syntrophus aciditrophicus (strain SB).